A 356-amino-acid polypeptide reads, in one-letter code: Putative mitogen-activated protein kinase 14C (356 aa).

The region spanning 20-305 is the Protein kinase domain; it reads YEFVRFLGGG…AAEAMLHPYL (286 aa). ATP-binding positions include 26 to 34 and Lys49; that span reads LGGGSFGQV. Asp147 functions as the Proton acceptor in the catalytic mechanism. Position 177 is a phosphothreonine (Thr177).

It belongs to the protein kinase superfamily. CMGC Ser/Thr protein kinase family. MAP kinase subfamily. It depends on Mg(2+) as a cofactor. The phosphorylation on Thr-177 activates the enzyme. A conserved Tyr, which must also be phosphorylated to activate the enzyme in closely related sequences, is replaced by His-179 in this sequence.

The catalysed reaction is L-seryl-[protein] + ATP = O-phospho-L-seryl-[protein] + ADP + H(+). It catalyses the reaction L-threonyl-[protein] + ATP = O-phospho-L-threonyl-[protein] + ADP + H(+). In terms of biological role, kinase involved in a signal transduction pathway. This chain is Putative mitogen-activated protein kinase 14C (p38c), found in Drosophila melanogaster (Fruit fly).